Reading from the N-terminus, the 360-residue chain is tRNA pseudouridine synthase D (360 aa).

The active-site Nucleophile is the Asp-76. Residues 151–332 (GMPNFFGYQR…HGIYKEKNAW (182 aa)) enclose the TRUD domain.

It belongs to the pseudouridine synthase TruD family.

It carries out the reaction uridine(13) in tRNA = pseudouridine(13) in tRNA. In terms of biological role, responsible for synthesis of pseudouridine from uracil-13 in transfer RNAs. The chain is tRNA pseudouridine synthase D from Nitratiruptor sp. (strain SB155-2).